Here is a 263-residue protein sequence, read N- to C-terminus: Inactive adenylate kinase (263 aa).

Belongs to the adenylate kinase family.

The protein localises to the cytoplasm. In terms of biological role, lacks adenylate kinase activity. This Plasmodium falciparum (isolate 3D7) protein is Inactive adenylate kinase.